Here is a 475-residue protein sequence, read N- to C-terminus: ATP synthase subunit beta, chloroplastic (475 aa).

Residue 155 to 162 (GGAGVGKT) participates in ATP binding.

Belongs to the ATPase alpha/beta chains family. As to quaternary structure, F-type ATPases have 2 components, CF(1) - the catalytic core - and CF(0) - the membrane proton channel. CF(1) has five subunits: alpha(3), beta(3), gamma(1), delta(1), epsilon(1). CF(0) has four main subunits: a(1), b(1), b'(1) and c(9-12).

The protein resides in the plastid. Its subcellular location is the chloroplast thylakoid membrane. It carries out the reaction ATP + H2O + 4 H(+)(in) = ADP + phosphate + 5 H(+)(out). Its function is as follows. Produces ATP from ADP in the presence of a proton gradient across the membrane. The catalytic sites are hosted primarily by the beta subunits. This is ATP synthase subunit beta, chloroplastic from Ochrosphaera neapolitana.